The sequence spans 431 residues: tRNA-2-methylthio-N(6)-dimethylallyladenosine synthase (431 aa).

The MTTase N-terminal domain occupies 4–120 (RAVYIKTFGC…IENIIENQVS (117 aa)). [4Fe-4S] cluster is bound by residues Cys-13, Cys-49, Cys-83, Cys-154, Cys-158, and Cys-161. The region spanning 140-367 (RKDCVKAWVN…LKLQDEITER (228 aa)) is the Radical SAM core domain. The region spanning 370 to 430 (KRLEGKIQEV…RHSLEGDIIS (61 aa)) is the TRAM domain.

It belongs to the methylthiotransferase family. MiaB subfamily. In terms of assembly, monomer. [4Fe-4S] cluster is required as a cofactor.

It is found in the cytoplasm. It catalyses the reaction N(6)-dimethylallyladenosine(37) in tRNA + (sulfur carrier)-SH + AH2 + 2 S-adenosyl-L-methionine = 2-methylsulfanyl-N(6)-dimethylallyladenosine(37) in tRNA + (sulfur carrier)-H + 5'-deoxyadenosine + L-methionine + A + S-adenosyl-L-homocysteine + 2 H(+). In terms of biological role, catalyzes the methylthiolation of N6-(dimethylallyl)adenosine (i(6)A), leading to the formation of 2-methylthio-N6-(dimethylallyl)adenosine (ms(2)i(6)A) at position 37 in tRNAs that read codons beginning with uridine. The protein is tRNA-2-methylthio-N(6)-dimethylallyladenosine synthase of Thermodesulfovibrio yellowstonii (strain ATCC 51303 / DSM 11347 / YP87).